The chain runs to 585 residues: Staphyloferrin A synthase (585 aa).

Belongs to the IucA/IucC family.

The enzyme catalyses N(5)-[(S)-citryl]-D-ornithine + citrate + ATP = staphyloferrin A + AMP + diphosphate + H(+). It functions in the pathway siderophore biosynthesis. Its function is as follows. Involved in the biosynthesis of the siderophore staphyloferrin A. Catalyzes the ATP-dependent condensation of a citryl-D-ornithine intermediate, produced by SfnaD, and citrate to form staphyloferrin A. The polypeptide is Staphyloferrin A synthase (Staphylococcus aureus (strain NCTC 8325 / PS 47)).